We begin with the raw amino-acid sequence, 537 residues long: Proline--tRNA ligase (537 aa).

This sequence belongs to the class-II aminoacyl-tRNA synthetase family. ProS type 3 subfamily. As to quaternary structure, homodimer.

It localises to the cytoplasm. It carries out the reaction tRNA(Pro) + L-proline + ATP = L-prolyl-tRNA(Pro) + AMP + diphosphate. Functionally, catalyzes the attachment of proline to tRNA(Pro) in a two-step reaction: proline is first activated by ATP to form Pro-AMP and then transferred to the acceptor end of tRNA(Pro). The polypeptide is Proline--tRNA ligase (Nanoarchaeum equitans (strain Kin4-M)).